The following is a 98-amino-acid chain: MFAPRVFLSMIGALAAFAVATYYLNGSLASTAIQTLICAVLIQVGYFIAVLFLVWKEARERRRLSSQKQFMTAEAANDEKQPGKVSLRRLNRPHHLNS.

The next 2 helical transmembrane spans lie at 6–26 (VFLS…YLNG) and 35–55 (TLIC…FLVW). Positions 73-98 (AEAANDEKQPGKVSLRRLNRPHHLNS) are disordered. Residues 86 to 98 (SLRRLNRPHHLNS) are compositionally biased toward basic residues.

The protein localises to the cell membrane. The protein operates within glycan metabolism; exopolysaccharide biosynthesis. Inhibition of exopolysaccharide synthesis (EPS) and nodulation ability (NOD). This chain is Exopolysaccharide production repressor protein (exoX), found in Rhizobium meliloti (strain 1021) (Ensifer meliloti).